Reading from the N-terminus, the 219-residue chain is Phosphatidylserine decarboxylase proenzyme (219 aa).

The active-site Schiff-base intermediate with substrate; via pyruvic acid is the serine 188. Serine 188 is subject to Pyruvic acid (Ser); by autocatalysis.

It belongs to the phosphatidylserine decarboxylase family. PSD-A subfamily. Heterodimer of a large membrane-associated beta subunit and a small pyruvoyl-containing alpha subunit. Pyruvate is required as a cofactor. Is synthesized initially as an inactive proenzyme. Formation of the active enzyme involves a self-maturation process in which the active site pyruvoyl group is generated from an internal serine residue via an autocatalytic post-translational modification. Two non-identical subunits are generated from the proenzyme in this reaction, and the pyruvate is formed at the N-terminus of the alpha chain, which is derived from the carboxyl end of the proenzyme. The post-translation cleavage follows an unusual pathway, termed non-hydrolytic serinolysis, in which the side chain hydroxyl group of the serine supplies its oxygen atom to form the C-terminus of the beta chain, while the remainder of the serine residue undergoes an oxidative deamination to produce ammonia and the pyruvoyl prosthetic group on the alpha chain.

The protein localises to the cell membrane. It catalyses the reaction a 1,2-diacyl-sn-glycero-3-phospho-L-serine + H(+) = a 1,2-diacyl-sn-glycero-3-phosphoethanolamine + CO2. Its pathway is phospholipid metabolism; phosphatidylethanolamine biosynthesis; phosphatidylethanolamine from CDP-diacylglycerol: step 2/2. Its function is as follows. Catalyzes the formation of phosphatidylethanolamine (PtdEtn) from phosphatidylserine (PtdSer). This chain is Phosphatidylserine decarboxylase proenzyme, found in Ruegeria pomeroyi (strain ATCC 700808 / DSM 15171 / DSS-3) (Silicibacter pomeroyi).